A 337-amino-acid chain; its full sequence is Vacuolar protein sorting-associated protein 26B (337 aa).

The tract at residues 311–337 (SQRFEGTSHPETRPQHSGAAAVEQEQE) is disordered.

Belongs to the VPS26 family. Component of the heterotrimeric retromer cargo-selective complex (CSC) which is believed to associate with variable sorting nexins to form functionally distinct retromer complex variants.

It localises to the cytoplasm. It is found in the membrane. The protein resides in the endosome. Functionally, acts as a component of the retromer cargo-selective complex (CSC). The CSC is believed to be the core functional component of retromer or respective retromer complex variants acting to prevent missorting of selected transmembrane cargo proteins into the lysosomal degradation pathway. Retromer mediates retrograde transport of cargo proteins from endosomes to the trans-Golgi network (TGN). The sequence is that of Vacuolar protein sorting-associated protein 26B (vps26b) from Xenopus tropicalis (Western clawed frog).